We begin with the raw amino-acid sequence, 259 residues long: DNA terminal protein (259 aa).

O-(5'-phospho-DNA)-tyrosine is present on Tyr-190. A Nuclear localization signal motif is present at residues 243–259 (KKKYKRRQKRGYGSKGV).

The protein belongs to the tectivirus DNA terminal protein family. In terms of assembly, heterodimer with viral polymerase. Binds to ssDNA.

The protein resides in the virion. It localises to the host nucleus. Functionally, acts as a primer for viral genomic replication. DNA terminal protein is covalently linked to the 5'-ends of both strands of the genome through a phosphodiester bond between the beta-hydroxyl group of a tyrosine residue and the 5'-phosphate of the terminal deoxyadenylate. This protein is essential for DNA replication and is involved in the priming of DNA elongation. This is DNA terminal protein (VIII) from Enterobacteria phage PRD1 (Bacteriophage PRD1).